The following is a 605-amino-acid chain: Adenine deaminase (605 aa).

It belongs to the metallo-dependent hydrolases superfamily. Adenine deaminase family. The cofactor is Mn(2+).

The enzyme catalyses adenine + H2O + H(+) = hypoxanthine + NH4(+). This Staphylothermus marinus (strain ATCC 43588 / DSM 3639 / JCM 9404 / F1) protein is Adenine deaminase.